The chain runs to 910 residues: Epithelial discoidin domain-containing receptor 1 (910 aa).

Positions 1–19 (MGTGTLSSLLLLLLLVTIG) are cleaved as a signal peptide. The Extracellular segment spans residues 22–414 (DMKGHFDPAK…VAKAEGSPTA (393 aa)). In terms of domain architecture, F5/8 type C spans 32–186 (CRYALGMQDR…VCLRVELYGC (155 aa)). Disulfide bonds link Cys32-Cys186 and Cys75-Cys178. Residues 193 to 368 (LSYTAPVGQT…LFSEISFISD (176 aa)) are DS-like domain. Residues Asn212, Gln231, Asp234, Val236, Tyr254, and Tyr256 each contribute to the Ca(2+) site. Asn212 is a glycosylation site (N-linked (GlcNAc...) asparagine). N-linked (GlcNAc...) asparagine glycosylation occurs at Asn261. An intrachain disulfide couples Cys304 to Cys349. Positions 361 and 362 each coordinate Ca(2+). N-linked (GlcNAc...) asparagine glycosylation is found at Asn371 and Asn391. The chain crosses the membrane as a helical span at residues 415–435 (ILIGCLVAIILLLLLIIALML). Topologically, residues 436–910 (WRLHWRRLLS…FLADDALNTV (475 aa)) are cytoplasmic. The segment at 467–494 (ILINNRPGPREPPPYQEPRPRGTPTHSA) is disordered. The PPxY motif motif lies at 478-481 (PPPY). Tyr481, Tyr510, and Tyr517 each carry phosphotyrosine; by autocatalysis. One can recognise a Protein kinase domain in the interval 607–902 (LRFKEKLGEG…PPFSQLHRFL (296 aa)). Residues 613-621 (LGEGQFGEV) and Lys652 each bind ATP. Phosphotyrosine; by autocatalysis is present on Tyr737. Asp763 acts as the Proton acceptor in catalysis. Tyr789, Tyr793, and Tyr794 each carry phosphotyrosine; by autocatalysis.

It belongs to the protein kinase superfamily. Tyr protein kinase family. Insulin receptor subfamily. As to quaternary structure, homodimer. Interacts (via PPxY motif) with WWC1 (via WW domains) in a collagen-regulated manner. Forms a tripartite complex with WWC1 and PRKCZ, but predominantly in the absence of collagen. Interacts (tyrosine phosphorylated) with SHC1. Interacts with SRC. Interacts with MYH9. Interacts with CDH1. Interacts with PTPN11. Interacts with NCK2. Post-translationally, autophosphorylated in response to fibrillar collagen binding. In terms of tissue distribution, various embryonic and adult tissues; also proliferative zones of the developing brain; hippocampal neurons.

It is found in the cell membrane. It carries out the reaction L-tyrosyl-[protein] + ATP = O-phospho-L-tyrosyl-[protein] + ADP + H(+). Tyrosine kinase that functions as a cell surface receptor for fibrillar collagen and regulates cell attachment to the extracellular matrix, remodeling of the extracellular matrix, cell migration, differentiation, survival and cell proliferation. Collagen binding triggers a signaling pathway that involves SRC and leads to the activation of MAP kinases. Regulates remodeling of the extracellular matrix by up-regulation of the matrix metalloproteinases MMP2, MMP7 and MMP9, and thereby facilitates cell migration and wound healing. Promotes smooth muscle cell migration, and thereby contributes to arterial wound healing. Also plays a role in tumor cell invasion. Phosphorylates PTPN11. Required for normal blastocyst implantation during pregnancy, for normal mammary gland differentiation and normal lactation. Required for normal ear morphology and normal hearing. The protein is Epithelial discoidin domain-containing receptor 1 (Ddr1) of Rattus norvegicus (Rat).